Consider the following 368-residue polypeptide: Putative flavoprotein monooxygenase (368 aa).

Residues Ala-14, Glu-34, Ser-41, 52–53 (IT), Val-110, Ala-307, and Ile-319 each bind FAD.

FAD serves as cofactor.

In terms of biological role, FAD-binding protein that may have monooxygenase activity using NADPH and/or NADH as an electron donor. The sequence is that of Putative flavoprotein monooxygenase from Staphylococcus aureus (strain Mu50 / ATCC 700699).